Reading from the N-terminus, the 475-residue chain is LEC14B homolog (475 aa).

The tract at residues 1 to 34 (MSYRTRFGKDNSACDSGNAVEGSGSSKGPNEVSN) is disordered. Polar residues predominate over residues 23–33 (SGSSKGPNEVS). WD repeat units follow at residues 211 to 240 (DEFGIFSVRFSTDGRELVAASRDASIYVYD), 252 to 283 (AHSSDVNTVCFADETGHLIYSGSDDNLCKVWD), 299 to 329 (GHLEGVTFIDSRGDGRYFISNGKDQTTQLWD), 375 to 411 (GHGVLRTLIRCYLSPAYSTGQKYIYTGSSDHCVYIYD), and 423 to 453 (HHEGPVRDCSWHPLYPMLVSSSWDGTIARWE).

It belongs to the WD repeat LEC14B family.

In Prunus armeniaca (Apricot), this protein is LEC14B homolog.